A 506-amino-acid chain; its full sequence is Histidine ammonia-lyase (506 aa).

The segment at residues 143–145 (ASG) is a cross-link (5-imidazolinone (Ala-Gly)). S144 carries the 2,3-didehydroalanine (Ser) modification.

It belongs to the PAL/histidase family. Post-translationally, contains an active site 4-methylidene-imidazol-5-one (MIO), which is formed autocatalytically by cyclization and dehydration of residues Ala-Ser-Gly.

The protein localises to the cytoplasm. The catalysed reaction is L-histidine = trans-urocanate + NH4(+). Its pathway is amino-acid degradation; L-histidine degradation into L-glutamate; N-formimidoyl-L-glutamate from L-histidine: step 1/3. In Salmonella typhimurium (strain LT2 / SGSC1412 / ATCC 700720), this protein is Histidine ammonia-lyase.